Here is a 190-residue protein sequence, read N- to C-terminus: Peptidyl-tRNA hydrolase (190 aa).

A tRNA-binding site is contributed by Phe14. The Proton acceptor role is filled by His19. Residues Met64, Asn66, and Asn112 each coordinate tRNA.

This sequence belongs to the PTH family. In terms of assembly, monomer.

It is found in the cytoplasm. It carries out the reaction an N-acyl-L-alpha-aminoacyl-tRNA + H2O = an N-acyl-L-amino acid + a tRNA + H(+). Functionally, hydrolyzes ribosome-free peptidyl-tRNAs (with 1 or more amino acids incorporated), which drop off the ribosome during protein synthesis, or as a result of ribosome stalling. Catalyzes the release of premature peptidyl moieties from peptidyl-tRNA molecules trapped in stalled 50S ribosomal subunits, and thus maintains levels of free tRNAs and 50S ribosomes. This Staphylococcus saprophyticus subsp. saprophyticus (strain ATCC 15305 / DSM 20229 / NCIMB 8711 / NCTC 7292 / S-41) protein is Peptidyl-tRNA hydrolase.